The primary structure comprises 1026 residues: Multidrug resistance protein MdtC (1026 aa).

The next 11 helical transmembrane spans lie at 15–35, 333–353, 360–380, 387–407, 431–451, 463–483, 528–548, 853–873, 897–917, 953–973, and 984–1004; these read ILIA…LPVA, EVEE…FLFL, LIPA…MYLC, LSLM…IVVL, VGFT…PLLL, FAVT…TLTP, LVGV…IAIP, LILI…LYES, LFNA…IGIV, PIMM…LSGG, and ITIV…TPVV.

Belongs to the resistance-nodulation-cell division (RND) (TC 2.A.6) family. MdtC subfamily. As to quaternary structure, part of a tripartite efflux system composed of MdtA, MdtB and MdtC. MdtC forms a heteromultimer with MdtB.

Its subcellular location is the cell inner membrane. This is Multidrug resistance protein MdtC from Salmonella dublin (strain CT_02021853).